The following is a 746-amino-acid chain: NAD(P)H-quinone oxidoreductase subunit 5, chloroplastic (746 aa).

The next 16 helical transmembrane spans lie at 9–29 (WIIP…LLLF), 40–60 (WTFL…YLSI), 89–109 (IDPL…LVLI), 125–145 (FAYM…SNLI), 147–167 (VYFF…FWFT), 185–205 (GDFG…SFEF), 221–241 (VNLL…IAKS), 258–278 (TPIS…FLVA), 280–300 (LLPL…IGII), 327–347 (LGYM…FHLI), 354–374 (ALLF…VGYS), 396–416 (TAFL…CFWS), 425–445 (LLFS…TAFY), 547–567 (ILFP…IGIP), 608–628 (FSVS…KPFY), and 723–743 (YLFL…FFYF).

The protein belongs to the complex I subunit 5 family. NDH is composed of at least 16 different subunits, 5 of which are encoded in the nucleus.

It localises to the plastid. It is found in the chloroplast thylakoid membrane. It catalyses the reaction a plastoquinone + NADH + (n+1) H(+)(in) = a plastoquinol + NAD(+) + n H(+)(out). It carries out the reaction a plastoquinone + NADPH + (n+1) H(+)(in) = a plastoquinol + NADP(+) + n H(+)(out). Functionally, NDH shuttles electrons from NAD(P)H:plastoquinone, via FMN and iron-sulfur (Fe-S) centers, to quinones in the photosynthetic chain and possibly in a chloroplast respiratory chain. The immediate electron acceptor for the enzyme in this species is believed to be plastoquinone. Couples the redox reaction to proton translocation, and thus conserves the redox energy in a proton gradient. The protein is NAD(P)H-quinone oxidoreductase subunit 5, chloroplastic (ndhF) of Lepidium virginicum (Virginia pepperweed).